We begin with the raw amino-acid sequence, 141 residues long: Protein NrdI (141 aa).

Belongs to the NrdI family.

Probably involved in ribonucleotide reductase function. This Wigglesworthia glossinidia brevipalpis protein is Protein NrdI.